Consider the following 469-residue polypeptide: uncharacterized protein (469 aa).

The span at 152 to 161 (VREGKEEKKG) shows a compositional bias: basic and acidic residues. Positions 152–174 (VREGKEEKKGGPPGRGPPGWRRR) are disordered. 2 coiled-coil regions span residues 346-375 (KAALEQNDRLRSELEMEVALLQSAKERSES) and 423-453 (SDITENRIKSIEHEAIQLETENMILKKKIKG).

This is an uncharacterized protein from Homo sapiens (Human).